A 484-amino-acid chain; its full sequence is Secreted RxLR effector protein 104 (484 aa).

The N-terminal stretch at 1–24 is a signal peptide; that stretch reads MRSAYPVLTALLVVASSQIAAGSG. A RxLR-dEER motif is present at residues 48 to 65; sequence RFLRGSRDVHNNVANEER. N175 is a glycosylation site (N-linked (GlcNAc...) asparagine). Positions 324 to 463 are disordered; sequence ENPKGQSPYP…SSSVLTPEDV (140 aa). Over residues 327-346 the composition is skewed to polar residues; the sequence is KGQSPYPSTPLTAASTSKGG. Over residues 402–413 the composition is skewed to low complexity; sequence SSSSGPSRAFAP. Residues 418–428 are compositionally biased toward polar residues; sequence DQTFITENSRL.

The protein belongs to the RxLR effector family.

It is found in the secreted. It localises to the host nucleus. Functionally, secreted effector that completely suppresses the host cell death induced by cell death-inducing proteins. The protein is Secreted RxLR effector protein 104 of Plasmopara viticola (Downy mildew of grapevine).